We begin with the raw amino-acid sequence, 238 residues long: Tetraspanin-4 (238 aa).

Topologically, residues 1–13 (MARACLQAVKYLM) are cytoplasmic. The chain crosses the membrane as a helical span at residues 14-34 (FAFNLLFWLGGCGVLGVGIWL). At 35-55 (AATQGSFATLSSSFPSLSAAN) the chain is on the extracellular side. A helical transmembrane segment spans residues 56-76 (LLIITGAFVMAIGFVGCLGAI). The Cytoplasmic portion of the chain corresponds to 77-85 (KENKCLLLT). Residues 86-106 (FFLLLLLVFLLEATIAILFFA) traverse the membrane as a helical segment. Topologically, residues 107–201 (YTDKIDRYAQ…ETVKVWLQEN (95 aa)) are extracellular. N-linked (GlcNAc...) asparagine glycans are attached at residues Asn152 and Asn161. Residues 202–222 (LLAVGIFGLCTALVQILGLTF) traverse the membrane as a helical segment. The Cytoplasmic segment spans residues 223-238 (AMTMYCQVVKADTYCA).

It belongs to the tetraspanin (TM4SF) family. Forms a complex with integrins.

It is found in the membrane. The chain is Tetraspanin-4 (TSPAN4) from Pongo abelii (Sumatran orangutan).